Consider the following 241-residue polypeptide: DNA repair protein RecO (241 aa).

It belongs to the RecO family.

Its function is as follows. Involved in DNA repair and RecF pathway recombination. The polypeptide is DNA repair protein RecO (Azobacteroides pseudotrichonymphae genomovar. CFP2).